The chain runs to 221 residues: Imidazoleglycerol-phosphate dehydratase (221 aa).

The protein belongs to the imidazoleglycerol-phosphate dehydratase family.

It catalyses the reaction D-erythro-1-(imidazol-4-yl)glycerol 3-phosphate = 3-(imidazol-4-yl)-2-oxopropyl phosphate + H2O. The protein operates within amino-acid biosynthesis; L-histidine biosynthesis; L-histidine from 5-phospho-alpha-D-ribose 1-diphosphate: step 6/9. This is Imidazoleglycerol-phosphate dehydratase (HIS3) from Kluyveromyces marxianus (Yeast).